The chain runs to 808 residues: Probable inorganic carbon transporter subunit DabA (808 aa).

The Zn(2+) site is built by cysteine 334, aspartate 336, histidine 494, and cysteine 509.

Belongs to the inorganic carbon transporter (TC 9.A.2) DabA family. In terms of assembly, forms a complex with DabB. Zn(2+) is required as a cofactor.

Its subcellular location is the cell inner membrane. Functionally, part of an energy-coupled inorganic carbon pump. The chain is Probable inorganic carbon transporter subunit DabA from Rhodopseudomonas palustris (strain BisB5).